The primary structure comprises 138 residues: Basic phospholipase A2 beta-bungarotoxin A-AL3 chain (138 aa).

The first 10 residues, 1-10 (LAVCVSLIGA), serve as a signal peptide directing secretion. The propeptide occupies 11–18 (ANIPPQHL). 6 disulfides stabilise this stretch: C45-C137, C47-C63, C62-C118, C69-C111, C79-C104, and C97-C109. Ca(2+) contacts are provided by Y46, G48, and G50. H66 is a catalytic residue. Residue D67 participates in Ca(2+) binding. D112 is an active-site residue.

The protein belongs to the phospholipase A2 family. Group I subfamily. D49 sub-subfamily. As to quaternary structure, heterodimer; disulfide-linked. The A chains have phospholipase A2 activity and the B chains show homology with the basic protease inhibitors. Ca(2+) serves as cofactor. As to expression, expressed by the venom gland.

The protein resides in the secreted. It catalyses the reaction a 1,2-diacyl-sn-glycero-3-phosphocholine + H2O = a 1-acyl-sn-glycero-3-phosphocholine + a fatty acid + H(+). In terms of biological role, snake venom phospholipase A2 (PLA2) that inhibits neuromuscular transmission by blocking acetylcholine release from the nerve termini. PLA2 catalyzes the calcium-dependent hydrolysis of the 2-acyl groups in 3-sn-phosphoglycerides. The chain is Basic phospholipase A2 beta-bungarotoxin A-AL3 chain from Bungarus multicinctus (Many-banded krait).